Here is a 278-residue protein sequence, read N- to C-terminus: Cytoplasmic envelopment protein 1 (278 aa).

The protein belongs to the herpesviridae cytoplasmic envelopment protein 1 family. Interacts with BSRF1 tegument protein; the BBRF2-BSRF1 complexes oligomerize and might play a role in tethering the viral nucleocapsids to the host Golgi membrane during secondary envelopment.

Its subcellular location is the virion. The protein localises to the virion tegument. It is found in the host cytoplasm. The protein resides in the host Golgi apparatus. Plays a critical role in cytoplasmic virus egress. Participates in the final step of tegumentation and envelope acquisition within the host cytoplasm. In Homo sapiens (Human), this protein is Cytoplasmic envelopment protein 1.